The following is a 255-amino-acid chain: MAAFASALRVLPSPPAAVPRRLRSREQRQGCRSRRYSKVVAYYALTTPPYKLDALEPYISKRTVELHWGKHQQDYVDSLNKQLATSMFYGYTLEELIKEAYNNGNPLPEYNNAAQVWNHHFFWESMQPEGGGSPGRGVLQQIEKDFGSFTNFREEFIRSALSLLGSGWVWLVLKRKERKFSVVHTQNAISPLALGDIPLINLDLWEHAYYLDYKDDRRMYVTNFIDHLVSWDTVTLRMMRAEAFVNLGEPNIPVA.

The N-terminal 32 residues, 1-32 (MAAFASALRVLPSPPAAVPRRLRSREQRQGCR), are a transit peptide targeting the chloroplast. Fe cation contacts are provided by histidine 67, histidine 119, aspartate 203, and histidine 207.

The protein belongs to the iron/manganese superoxide dismutase family. In terms of assembly, homodimer. The cofactor is Fe cation. In terms of tissue distribution, strongly expressed in the stems of the young seedlings, etiolated seedlings and embryogenic calli, but only minimally expressed in the leaves and the roots.

Its subcellular location is the plastid. The protein localises to the chloroplast. It carries out the reaction 2 superoxide + 2 H(+) = H2O2 + O2. In terms of biological role, destroys superoxide anion radicals which are normally produced within the cells and which are toxic to biological systems. In Oryza sativa subsp. japonica (Rice), this protein is Superoxide dismutase [Fe] 2, chloroplastic.